A 118-amino-acid chain; its full sequence is Phospholipase A2 'basic' (118 aa).

Cystine bridges form between Cys11-Cys70, Cys26-Cys117, Cys28-Cys44, Cys43-Cys98, Cys50-Cys91, Cys59-Cys84, and Cys77-Cys89. Residues Tyr27, Gly29, and Gly31 each contribute to the Ca(2+) site. The active site involves His47. Asp48 is a Ca(2+) binding site. The short motif at 52-69 (EKAGKMGCWPYLTLYKYK) is the Coagulation factor Xa binding motif element. The active site involves Asp92.

The protein belongs to the phospholipase A2 family. Group I subfamily. D49 sub-subfamily. Requires Ca(2+) as cofactor. Expressed by the venom gland.

The protein resides in the secreted. The catalysed reaction is a 1,2-diacyl-sn-glycero-3-phosphocholine + H2O = a 1-acyl-sn-glycero-3-phosphocholine + a fatty acid + H(+). Functionally, snake venom phospholipase A2 (PLA2) that shows strong anticoagulant activity. Binds directly with the coagulation factor FXa (F10) and blocks the formation of the prothombinase complex. Acts by a nonenzymatic mechanism. Also inhibits the complex composed of tissue factor (F3) and coagulation factor VIIa (F7) (TF-VIIa complex) by both enzymatic and nonenzymatic mechanisms. PLA2 catalyzes the calcium-dependent hydrolysis of the 2-acyl groups in 3-sn-phosphoglycerides. This Naja nigricollis (Black-necked spitting cobra) protein is Phospholipase A2 'basic'.